Consider the following 297-residue polypeptide: HTH-type transcriptional regulator ArgP (297 aa).

One can recognise an HTH lysR-type domain in the interval 2-58 (FDYKLLSALAAVVEQAGFERAAQVLGLSQSAISQRIKLLEARVGQPVLVRGTPPSPT). The segment at residues 19–38 (FERAAQVLGLSQSAISQRIK) is a DNA-binding region (H-T-H motif).

It belongs to the LysR transcriptional regulatory family. As to quaternary structure, homodimer.

Controls the transcription of genes involved in arginine and lysine metabolism. The polypeptide is HTH-type transcriptional regulator ArgP (Pseudomonas fluorescens (strain Pf0-1)).